A 96-amino-acid polypeptide reads, in one-letter code: Probable RNA-binding protein YqeI (96 aa).

The CRM domain occupies 1–96; sequence MLTGKQKRFL…SKENKQIELP (96 aa).

The protein is Probable RNA-binding protein YqeI (yqeI) of Bacillus subtilis (strain 168).